Consider the following 234-residue polypeptide: 2-C-methyl-D-erythritol 4-phosphate cytidylyltransferase (234 aa).

The protein belongs to the IspD/TarI cytidylyltransferase family. IspD subfamily.

It carries out the reaction 2-C-methyl-D-erythritol 4-phosphate + CTP + H(+) = 4-CDP-2-C-methyl-D-erythritol + diphosphate. The protein operates within isoprenoid biosynthesis; isopentenyl diphosphate biosynthesis via DXP pathway; isopentenyl diphosphate from 1-deoxy-D-xylulose 5-phosphate: step 2/6. Functionally, catalyzes the formation of 4-diphosphocytidyl-2-C-methyl-D-erythritol from CTP and 2-C-methyl-D-erythritol 4-phosphate (MEP). This chain is 2-C-methyl-D-erythritol 4-phosphate cytidylyltransferase, found in Syntrophus aciditrophicus (strain SB).